A 755-amino-acid chain; its full sequence is Atypical kinase coq-8, mitochondrial (755 aa).

The tract at residues Gln57–Pro78 is disordered. The segment covering Lys67–Pro78 has biased composition (polar residues). Residues Phe435–Val443 and Lys457 each bind ATP. Residue Asp587 is the Proton acceptor of the active site.

Belongs to the protein kinase superfamily. ADCK protein kinase family.

It is found in the mitochondrion. It functions in the pathway cofactor biosynthesis; ubiquinone biosynthesis. In terms of biological role, atypical kinase involved in the biosynthesis of coenzyme Q, also named ubiquinone, an essential lipid-soluble electron transporter for aerobic cellular respiration. Its substrate specificity is still unclear: may act as a protein kinase that mediates phosphorylation of coq-3. According to other reports, acts as a small molecule kinase, possibly a lipid kinase that phosphorylates a prenyl lipid in the ubiquinone biosynthesis pathway, as suggested by its ability to bind coenzyme Q lipid intermediates. The polypeptide is Atypical kinase coq-8, mitochondrial (coq-8) (Caenorhabditis elegans).